Here is an 883-residue protein sequence, read N- to C-terminus: Probable pre-mRNA-splicing factor ATP-dependent RNA helicase DEAH8 (883 aa).

Residues 232-395 (LKLIEENQVL…FDSARIYLIP (164 aa)) form the Helicase ATP-binding domain. An ATP-binding site is contributed by 245 to 252 (GETGSGKT). Residues 342-345 (DEAH) carry the DEAH box motif. The Helicase C-terminal domain maps to 416 to 589 (TVIRTVVQIH…SVVLTLKSLG (174 aa)). A disordered region spans residues 845-883 (EDTRPKKTQRRIEEASTSKVDTNKKTRTSKVDTNKKSKR).

The protein belongs to the DEAD box helicase family. DEAH subfamily. PRP2 sub-subfamily. As to expression, predominantly expressed in flowers.

It carries out the reaction ATP + H2O = ADP + phosphate + H(+). Functionally, may be involved in pre-mRNA splicing. The chain is Probable pre-mRNA-splicing factor ATP-dependent RNA helicase DEAH8 from Arabidopsis thaliana (Mouse-ear cress).